Here is a 343-residue protein sequence, read N- to C-terminus: Uroporphyrinogen decarboxylase (343 aa).

Residues 26-30, Asp-75, Tyr-150, Ser-205, and His-319 each bind substrate; that span reads RQAGR.

The protein belongs to the uroporphyrinogen decarboxylase family. In terms of assembly, homodimer.

The protein localises to the cytoplasm. The enzyme catalyses uroporphyrinogen III + 4 H(+) = coproporphyrinogen III + 4 CO2. It functions in the pathway porphyrin-containing compound metabolism; protoporphyrin-IX biosynthesis; coproporphyrinogen-III from 5-aminolevulinate: step 4/4. Functionally, catalyzes the decarboxylation of four acetate groups of uroporphyrinogen-III to yield coproporphyrinogen-III. The sequence is that of Uroporphyrinogen decarboxylase from Syntrophotalea carbinolica (strain DSM 2380 / NBRC 103641 / GraBd1) (Pelobacter carbinolicus).